The following is a 92-amino-acid chain: UPF0223 protein SZO_10560 (92 aa).

The protein belongs to the UPF0223 family.

The protein is UPF0223 protein SZO_10560 of Streptococcus equi subsp. zooepidemicus (strain H70).